Here is a 209-residue protein sequence, read N- to C-terminus: Octanoyltransferase (209 aa).

One can recognise a BPL/LPL catalytic domain in the interval 28 to 203 (NATPETLLLL…RFQGLLDEWL (176 aa)). Residues 66-73 (RGGDVTFH), 133-135 (AIG), and 146-148 (GFA) contribute to the substrate site. The active-site Acyl-thioester intermediate is C164.

The protein belongs to the LipB family.

It is found in the cytoplasm. It carries out the reaction octanoyl-[ACP] + L-lysyl-[protein] = N(6)-octanoyl-L-lysyl-[protein] + holo-[ACP] + H(+). It participates in protein modification; protein lipoylation via endogenous pathway; protein N(6)-(lipoyl)lysine from octanoyl-[acyl-carrier-protein]: step 1/2. Its function is as follows. Catalyzes the transfer of endogenously produced octanoic acid from octanoyl-acyl-carrier-protein onto the lipoyl domains of lipoate-dependent enzymes. Lipoyl-ACP can also act as a substrate although octanoyl-ACP is likely to be the physiological substrate. The polypeptide is Octanoyltransferase (Pelobacter propionicus (strain DSM 2379 / NBRC 103807 / OttBd1)).